The chain runs to 309 residues: MKRKIIVGSRRSKLALTQSNWVINKLKENYPEFDFEIKEIVTKGDRILDVTLSKVGGKGLFVSEVEQALSDEVIDFAVHSMKDVPSSLKEGLIIGAIPKRESPLDCFVFNRVNSLDELPQGSVIGTSSLRRAAQLLKHRPDFVIKPIRGNIDTRLQKLHAENFDAIILAKAGLARMGWLENTTLKLEDIPPELCLPAVGQGALAIECRESDQQIRDMLTSIHHEETGICVEAERVFLKKLNGGCEIPIAGFATRANEVVHFKGLVGNADGSIILASEQAGANPSEIGNKVAEDLLSEGADTIIKELRNI.

The residue at position 244 (C244) is an S-(dipyrrolylmethanemethyl)cysteine.

Belongs to the HMBS family. Monomer. Requires dipyrromethane as cofactor.

The catalysed reaction is 4 porphobilinogen + H2O = hydroxymethylbilane + 4 NH4(+). It participates in porphyrin-containing compound metabolism; protoporphyrin-IX biosynthesis; coproporphyrinogen-III from 5-aminolevulinate: step 2/4. Functionally, tetrapolymerization of the monopyrrole PBG into the hydroxymethylbilane pre-uroporphyrinogen in several discrete steps. The chain is Porphobilinogen deaminase from Listeria monocytogenes serotype 4b (strain CLIP80459).